The following is a 578-amino-acid chain: Protein SIA1 (578 aa).

Residues 1 to 28 (MFRNRRILLYARRFFLVWICFLFITSWS) form the signal peptide.

In terms of biological role, may be involved in the activation of the plasma membrane proton-ATPase by glucose. The polypeptide is Protein SIA1 (SIA1) (Kluyveromyces lactis (strain ATCC 8585 / CBS 2359 / DSM 70799 / NBRC 1267 / NRRL Y-1140 / WM37) (Yeast)).